Reading from the N-terminus, the 68-residue chain is Suppressor of RNA silencing (68 aa).

Residues 23–43 (LLTMSGAYVNVCVCIVFFILV) traverse the membrane as a helical segment.

Belongs to the virgaviridae suppressor of RNA silencing family.

Its subcellular location is the host endoplasmic reticulum membrane. In terms of biological role, suppressor of RNA-mediated gene silencing, also known as post-transcriptional gene silencing (PTGS), a mechanism of plant viral defense that performs sequence-specific inhibition of viral mRNAs expression. The RNA silencing suppression activity is variable depending on the origin of the isolate. The polypeptide is Suppressor of RNA silencing (8K protein) (Solanum nigrum (Black nightshade)).